The following is a 314-amino-acid chain: MSRPRRRGRDINGVLLLDKSQGMSSNDALQKVKRIYNANRAGHTGALDPLATGMLPICLGEATKFSQYLLDSDKRYRVIARLGQRTDTSDADGQIVEERPVTFSAEQLAAALDTFRGDIEQIPSMYSALKYQGKKLYEYARQGIEVPREARPITVYELLFIRHEGNELELEIHCSKGTYIRTIIDDLGEKLGCGAHVIYLRRLAVSKYPVERMVTLEHLRELVEQAEQQDIPAAELLDPLLMPMDSPASDYPVVNLPLTSSVYFKNGNPVRTSGAPLEGLVRVTEGENGKFIGMGEIDDEGRVAPRRLVVEYPA.

Residue His43 coordinates substrate. The active-site Nucleophile is the Asp48. Residues Tyr76, Tyr179, and Leu200 each coordinate substrate.

Belongs to the pseudouridine synthase TruB family. Type 1 subfamily.

The enzyme catalyses uridine(55) in tRNA = pseudouridine(55) in tRNA. In terms of biological role, responsible for synthesis of pseudouridine from uracil-55 in the psi GC loop of transfer RNAs. This chain is tRNA pseudouridine synthase B, found in Escherichia coli O139:H28 (strain E24377A / ETEC).